The following is a 411-amino-acid chain: Serine--tRNA ligase (411 aa).

226 to 228 (TSE) serves as a coordination point for L-serine. 257–259 (RKE) provides a ligand contact to ATP. An L-serine-binding site is contributed by Glu-280. Residue 344–347 (EISS) participates in ATP binding. Residue Ser-379 coordinates L-serine.

This sequence belongs to the class-II aminoacyl-tRNA synthetase family. Type-1 seryl-tRNA synthetase subfamily. As to quaternary structure, homodimer. The tRNA molecule binds across the dimer.

It is found in the cytoplasm. It carries out the reaction tRNA(Ser) + L-serine + ATP = L-seryl-tRNA(Ser) + AMP + diphosphate + H(+). The catalysed reaction is tRNA(Sec) + L-serine + ATP = L-seryl-tRNA(Sec) + AMP + diphosphate + H(+). The protein operates within aminoacyl-tRNA biosynthesis; selenocysteinyl-tRNA(Sec) biosynthesis; L-seryl-tRNA(Sec) from L-serine and tRNA(Sec): step 1/1. Its function is as follows. Catalyzes the attachment of serine to tRNA(Ser). Is also able to aminoacylate tRNA(Sec) with serine, to form the misacylated tRNA L-seryl-tRNA(Sec), which will be further converted into selenocysteinyl-tRNA(Sec). The protein is Serine--tRNA ligase of Campylobacter jejuni (strain RM1221).